We begin with the raw amino-acid sequence, 267 residues long: Phosphate import ATP-binding protein PstB (267 aa).

In terms of domain architecture, ABC transporter spans 21–262 (VAARNLDFYY…PSKQQTEDYI (242 aa)). An ATP-binding site is contributed by 53-60 (GPSGCGKS).

It belongs to the ABC transporter superfamily. Phosphate importer (TC 3.A.1.7) family. In terms of assembly, the complex is composed of two ATP-binding proteins (PstB), two transmembrane proteins (PstC and PstA) and a solute-binding protein (PstS).

The protein localises to the cell inner membrane. The catalysed reaction is phosphate(out) + ATP + H2O = ADP + 2 phosphate(in) + H(+). Its function is as follows. Part of the ABC transporter complex PstSACB involved in phosphate import. Responsible for energy coupling to the transport system. This Xanthomonas campestris pv. campestris (strain 8004) protein is Phosphate import ATP-binding protein PstB.